We begin with the raw amino-acid sequence, 411 residues long: Lissencephaly-1 homolog (411 aa).

The LisH domain maps to glutamine 9–threonine 41. Residues threonine 56–alanine 83 are a coiled coil. WD repeat units lie at residues glycine 106–lysine 147, glycine 148–lysine 187, glycine 191–threonine 230, glycine 233–glutamate 272, aspartate 275–threonine 334, glycine 337–threonine 376, and alanine 379–arginine 411.

Belongs to the WD repeat LIS1/nudF family.

It is found in the cytoplasm. The protein resides in the cytoskeleton. It localises to the microtubule organizing center. Its subcellular location is the centrosome. Functionally, positively regulates the activity of the minus-end directed microtubule motor protein dynein. May enhance dynein-mediated microtubule sliding by targeting dynein to the microtubule plus end. Required for several dynein- and microtubule-dependent processes. In Drosophila mojavensis (Fruit fly), this protein is Lissencephaly-1 homolog.